Reading from the N-terminus, the 124-residue chain is Small ribosomal subunit protein eS25 (124 aa).

Residues 1 to 22 (PPKDDKKKKDAGKSAKKDKDPV) show a composition bias toward basic and acidic residues. Residues 1–37 (PPKDDKKKKDAGKSAKKDKDPVNKSGGKAKKKKWSKG) are disordered. Basic residues predominate over residues 27–37 (GKAKKKKWSKG). Lys42 is subject to N6-acetyllysine. Lys51 bears the N6-acetyllysine; alternate mark. N6-succinyllysine; alternate is present on Lys51. N6-acetyllysine occurs at positions 59 and 65. Residue Lys93 is modified to N6-acetyllysine; alternate. Residue Lys93 is modified to N6-succinyllysine; alternate.

This sequence belongs to the eukaryotic ribosomal protein eS25 family. Component of the small ribosomal subunit.

It is found in the cytoplasm. Functionally, component of the small ribosomal subunit. The ribosome is a large ribonucleoprotein complex responsible for the synthesis of proteins in the cell. The protein is Small ribosomal subunit protein eS25 (RPS25) of Oryctolagus cuniculus (Rabbit).